We begin with the raw amino-acid sequence, 343 residues long: Polyprenal reductase 2 (343 aa).

The next 6 membrane-spanning stretches (helical) occupy residues 12–32, 66–86, 164–184, 223–243, 266–286, and 291–311; these read GAWI…SIPT, FAHF…ATWM, MHIL…LSLC, PLMK…WGWI, IIPY…AEIV, and LLIA…FVAA.

It belongs to the steroid 5-alpha reductase family. Polyprenal reductase subfamily. Expressed in roots, leaves, stems and flowers.

The protein localises to the endoplasmic reticulum membrane. It carries out the reaction a di-trans,poly-cis-dolichal + NADP(+) = a di-trans,poly-cis-polyprenal + NADPH + H(+). It participates in protein modification; protein glycosylation. Plays a key role in early steps of protein N-linked glycosylation by being involved in the conversion of polyprenol into dolichol. Acts as a polyprenal reductase that mediates the reduction of polyprenal into dolichal in a NADP-dependent mechanism. Dolichols are required for the synthesis of dolichol-linked monosaccharides and the oligosaccharide precursor used for N-glycosylation. Involved in the regulation of plant growth and reproductive processes. In Arabidopsis thaliana (Mouse-ear cress), this protein is Polyprenal reductase 2.